Here is a 246-residue protein sequence, read N- to C-terminus: UDP-N-acetyl-D-mannosaminuronic acid transferase (246 aa).

It belongs to the glycosyltransferase 26 family.

It carries out the reaction UDP-N-acetyl-alpha-D-mannosaminouronate + N-acetyl-alpha-D-glucosaminyl-di-trans,octa-cis-undecaprenyl diphosphate = beta-D-ManNAcA-(1-&gt;4)-alpha-D-GlcNAc-di-trans,octa-cis-undecaprenyl diphosphate + UDP + H(+). It functions in the pathway bacterial outer membrane biogenesis; enterobacterial common antigen biosynthesis. In terms of biological role, catalyzes the synthesis of Und-PP-GlcNAc-ManNAcA (Lipid II), the second lipid-linked intermediate involved in enterobacterial common antigen (ECA) synthesis. The sequence is that of UDP-N-acetyl-D-mannosaminuronic acid transferase from Yersinia pseudotuberculosis serotype IB (strain PB1/+).